The following is a 447-amino-acid chain: Serine/threonine-protein phosphatase 2A 55 kDa regulatory subunit B gamma isoform (447 aa).

WD repeat units follow at residues 22 to 61 (TEADIISTVEFNHTGELLATGDKGGRVVIFQREPESKNAP), 87 to 128 (EIEE…KRPE), 171 to 209 (GHTYHINSISVNSDCETYMSADDLRINLWHLAITDRSFN), 220 to 260 (DLTE…LCDK), 279 to 317 (EIISSVSDVKFSHSGRYMLTRDYLTVKVWDLNMEARPIE), 334 to 375 (ENDC…DVTL), and 410 to 446 (DFTKKILHTAWHPAENIIAIAATNNLYIFQDKVNSDM).

Belongs to the phosphatase 2A regulatory subunit B family. PP2A consists of a common heterodimeric core enzyme, composed of a 36 kDa catalytic subunit (subunit C) and a 65 kDa constant regulatory subunit (PR65 or subunit A), that associates with a variety of regulatory subunits. Proteins that associate with the core dimer include three families of regulatory subunits B (the R2/B/PR55/B55, R3/B''/PR72/PR130/PR59 and R5/B'/B56 families), the 48 kDa variable regulatory subunit, viral proteins, and cell signaling molecules. Interacts with IER5.

In terms of biological role, the B regulatory subunit might modulate substrate selectivity and catalytic activity, and might also direct the localization of the catalytic enzyme to a particular subcellular compartment. In Homo sapiens (Human), this protein is Serine/threonine-protein phosphatase 2A 55 kDa regulatory subunit B gamma isoform (PPP2R2C).